A 323-amino-acid polypeptide reads, in one-letter code: Pseudouridylate synthase TRUB2, mitochondrial (323 aa).

The active-site Nucleophile is the Asp-98. The segment at 302-323 (SGHQQQLPSAGQPWASRVQAPL) is disordered.

Belongs to the pseudouridine synthase TruB family. Forms a regulatory protein-RNA complex, consisting of RCC1L, NGRN, RPUSD3, RPUSD4, TRUB2, FASTKD2 and 16S mt-rRNA.

The protein resides in the mitochondrion matrix. It carries out the reaction a uridine in mRNA = a pseudouridine in mRNA. The enzyme catalyses uridine(55) in tRNA = pseudouridine(55) in tRNA. Its function is as follows. Minor enzyme contributing to the isomerization of uridine to pseudouridine (pseudouridylation) of specific mitochondrial mRNAs (mt-mRNAs) such as COXI and COXIII mt-mRNAs. As a component of a functional protein-RNA module, consisting of RCC1L, NGRN, RPUSD3, RPUSD4, TRUB2, FASTKD2 and 16S mitochondrial ribosomal RNA (16S mt-rRNA), controls 16S mt-rRNA abundance and is required for intra-mitochondrial translation. Also catalyzes pseudouridylation of some tRNAs, including synthesis of pseudouridine(55) from uracil-55, in the psi GC loop of a subset of tRNAs. The polypeptide is Pseudouridylate synthase TRUB2, mitochondrial (Rattus norvegicus (Rat)).